The following is a 56-amino-acid chain: uncharacterized protein (56 aa).

2 consecutive transmembrane segments (helical) span residues 5–23 (VLIF…YWIY) and 33–55 (ITAG…ILGW).

Its subcellular location is the cell membrane. This is an uncharacterized protein from Archaeoglobus fulgidus (strain ATCC 49558 / DSM 4304 / JCM 9628 / NBRC 100126 / VC-16).